Here is a 225-residue protein sequence, read N- to C-terminus: Uracil-DNA glycosylase (225 aa).

Aspartate 68 acts as the Proton acceptor in catalysis.

This sequence belongs to the uracil-DNA glycosylase (UDG) superfamily. UNG family.

It localises to the cytoplasm. The enzyme catalyses Hydrolyzes single-stranded DNA or mismatched double-stranded DNA and polynucleotides, releasing free uracil.. In terms of biological role, excises uracil residues from the DNA which can arise as a result of misincorporation of dUMP residues by DNA polymerase or due to deamination of cytosine. In Mycolicibacterium gilvum (strain PYR-GCK) (Mycobacterium gilvum (strain PYR-GCK)), this protein is Uracil-DNA glycosylase.